We begin with the raw amino-acid sequence, 94 residues long: Cell division topological specificity factor (94 aa).

This sequence belongs to the MinE family.

Functionally, prevents the cell division inhibition by proteins MinC and MinD at internal division sites while permitting inhibition at polar sites. This ensures cell division at the proper site by restricting the formation of a division septum at the midpoint of the long axis of the cell. The chain is Cell division topological specificity factor from Alkalilimnicola ehrlichii (strain ATCC BAA-1101 / DSM 17681 / MLHE-1).